A 194-amino-acid polypeptide reads, in one-letter code: Peptidyl-tRNA hydrolase (194 aa).

TRNA is bound at residue Tyr-17. The active-site Proton acceptor is His-22. Residues Phe-68, Asn-70, and Asn-116 each contribute to the tRNA site.

The protein belongs to the PTH family. Monomer.

The protein resides in the cytoplasm. The catalysed reaction is an N-acyl-L-alpha-aminoacyl-tRNA + H2O = an N-acyl-L-amino acid + a tRNA + H(+). Functionally, hydrolyzes ribosome-free peptidyl-tRNAs (with 1 or more amino acids incorporated), which drop off the ribosome during protein synthesis, or as a result of ribosome stalling. Its function is as follows. Catalyzes the release of premature peptidyl moieties from peptidyl-tRNA molecules trapped in stalled 50S ribosomal subunits, and thus maintains levels of free tRNAs and 50S ribosomes. The polypeptide is Peptidyl-tRNA hydrolase (Actinobacillus succinogenes (strain ATCC 55618 / DSM 22257 / CCUG 43843 / 130Z)).